The primary structure comprises 750 residues: GTP pyrophosphokinase rsh (750 aa).

The HD domain maps to Tyr-45–Met-144. In terms of domain architecture, TGS spans Asp-390–Arg-451. The tract at residues Ala-587–Leu-613 is disordered. In terms of domain architecture, ACT spans Arg-676–Gly-750.

This sequence belongs to the RelA/SpoT family.

It carries out the reaction GTP + ATP = guanosine 3'-diphosphate 5'-triphosphate + AMP. Functionally, functions as a (p)ppGpp synthase. In eubacteria ppGpp (guanosine 3'-diphosphate 5'-diphosphate) is a mediator of the stringent response that coordinates a variety of cellular activities in response to changes in nutritional abundance. It is necessary for persistence in mice, essential for intracellular growth of Brucella and required for expression of the type IV secretion system VirB and therefore plays a role in adaptation of Brucella to its intracellular host environment. This Brucella suis biovar 1 (strain 1330) protein is GTP pyrophosphokinase rsh (rsh).